We begin with the raw amino-acid sequence, 337 residues long: Ketol-acid reductoisomerase (NADP(+)) (337 aa).

A KARI N-terminal Rossmann domain is found at 1 to 180 (MQVYYDKDAD…GGTKGGVIET (180 aa)). NADP(+) is bound by residues 24–27 (YGSQ), Arg-47, and Ser-51. Residue His-106 is part of the active site. An NADP(+)-binding site is contributed by Gly-132. The region spanning 181-326 (TFREETETDL…AQLRAMMPWI (146 aa)) is the KARI C-terminal knotted domain. Positions 189, 193, 225, and 229 each coordinate Mg(2+). Ser-250 provides a ligand contact to substrate.

The protein belongs to the ketol-acid reductoisomerase family. Mg(2+) is required as a cofactor.

The enzyme catalyses (2R)-2,3-dihydroxy-3-methylbutanoate + NADP(+) = (2S)-2-acetolactate + NADPH + H(+). The catalysed reaction is (2R,3R)-2,3-dihydroxy-3-methylpentanoate + NADP(+) = (S)-2-ethyl-2-hydroxy-3-oxobutanoate + NADPH + H(+). Its pathway is amino-acid biosynthesis; L-isoleucine biosynthesis; L-isoleucine from 2-oxobutanoate: step 2/4. It participates in amino-acid biosynthesis; L-valine biosynthesis; L-valine from pyruvate: step 2/4. In terms of biological role, involved in the biosynthesis of branched-chain amino acids (BCAA). Catalyzes an alkyl-migration followed by a ketol-acid reduction of (S)-2-acetolactate (S2AL) to yield (R)-2,3-dihydroxy-isovalerate. In the isomerase reaction, S2AL is rearranged via a Mg-dependent methyl migration to produce 3-hydroxy-3-methyl-2-ketobutyrate (HMKB). In the reductase reaction, this 2-ketoacid undergoes a metal-dependent reduction by NADPH to yield (R)-2,3-dihydroxy-isovalerate. The chain is Ketol-acid reductoisomerase (NADP(+)) from Neisseria meningitidis serogroup A / serotype 4A (strain DSM 15465 / Z2491).